The chain runs to 327 residues: Glycerol-3-phosphate dehydrogenase [NAD(P)+] (327 aa).

The NADPH site is built by Ser10, Phe11, Arg31, and Lys108. Residues Lys108, Gly136, and Ser138 each contribute to the sn-glycerol 3-phosphate site. An NADPH-binding site is contributed by Ala140. Sn-glycerol 3-phosphate contacts are provided by Lys191, Asp246, Ser256, Arg257, and Asn258. The active-site Proton acceptor is the Lys191. Arg257 provides a ligand contact to NADPH. Residues Leu281 and Glu283 each coordinate NADPH.

Belongs to the NAD-dependent glycerol-3-phosphate dehydrogenase family.

It localises to the cytoplasm. The catalysed reaction is sn-glycerol 3-phosphate + NAD(+) = dihydroxyacetone phosphate + NADH + H(+). The enzyme catalyses sn-glycerol 3-phosphate + NADP(+) = dihydroxyacetone phosphate + NADPH + H(+). The protein operates within membrane lipid metabolism; glycerophospholipid metabolism. Catalyzes the reduction of the glycolytic intermediate dihydroxyacetone phosphate (DHAP) to sn-glycerol 3-phosphate (G3P), the key precursor for phospholipid synthesis. The protein is Glycerol-3-phosphate dehydrogenase [NAD(P)+] of Ehrlichia ruminantium (strain Welgevonden).